Reading from the N-terminus, the 2803-residue chain is Microtubule-associated protein 1A (2803 aa).

5 positions are modified to phosphoserine: Ser-114, Ser-117, Ser-118, Ser-121, and Ser-155. At Tyr-177 the chain carries Phosphotyrosine. 2 disordered regions span residues 302-466 (GAVP…DLKP) and 486-516 (IDRS…PLPT). Phosphoserine occurs at positions 319, 322, and 384. A compositionally biased stretch (basic and acidic residues) spans 335-390 (AKREEVVEEGAKEARSELAKELAKTEKKAKESSEKPPEKPAKPERVKTESSEALKA). Positions 391–406 (EKRKLIKDKVGKKHLK) are enriched in basic residues. Composition is skewed to basic and acidic residues over residues 407–464 (EKIS…KPDL) and 486–499 (IDRS…KELS). 8 consecutive repeat copies span residues 415 to 417 (KKD), 420 to 422 (KKE), 427 to 429 (RKE), 431 to 433 (KKD), 436 to 438 (RKE), 440 to 442 (KKD), 444 to 446 (KKE), and 449 to 451 (RKD). The interval 415-541 (KKDKEKKEIK…TQDFEEMKRE (127 aa)) is 9 X 3 AA repeats of K-K-[DE]. Phosphothreonine is present on Thr-504. Phosphoserine occurs at positions 526 and 527. The stretch at 539–541 (KRE) is repeat 9. Basic and acidic residues-rich tracts occupy residues 539–554 (KREE…DTGL) and 585–596 (QEEHVMKEKELV). Disordered regions lie at residues 539–712 (KREE…KAPE), 734–806 (YIQD…GTPE), 847–1080 (EDQS…VNID), 1109–1548 (TGPI…EKKD), and 1573–1605 (EENH…EKVK). A phosphoserine mark is found at Ser-605 and Ser-612. Residue Thr-616 is modified to Phosphothreonine. Over residues 623–667 (WEEKKQREAERLPDRTEAREESEPEVKEDVIEKAELEEMEEVHPS) the composition is skewed to basic and acidic residues. A phosphoserine mark is found at Ser-644, Ser-667, and Ser-787. 2 stretches are compositionally biased toward polar residues: residues 847–860 (EDQS…PQTE) and 871–883 (TVTS…TEAT). Residues Ser-874, Ser-877, Ser-878, and Ser-891 each carry the phosphoserine modification. The residue at position 894 (Thr-894) is a Phosphothreonine. Phosphoserine is present on residues Ser-896, Ser-900, Ser-909, Ser-986, Ser-996, Ser-1004, Ser-1013, Ser-1019, and Ser-1029. A compositionally biased stretch (basic and acidic residues) spans 1031 to 1065 (GDTKRTPGVGKEDAAEETVKPGPEEGTLEKEEKVP). Phosphoserine is present on residues Ser-1069, Ser-1144, Ser-1146, Ser-1160, Ser-1172, Ser-1190, Ser-1200, Ser-1203, Ser-1209, Ser-1218, Ser-1221, and Ser-1264. The span at 1131 to 1146 (KPQKDEVLRYPDRSLS) shows a compositional bias: basic and acidic residues. Polar residues predominate over residues 1154 to 1169 (SVLSVPSPDTANQEPT). Composition is skewed to polar residues over residues 1211 to 1224 (DVSS…SLGT) and 1264 to 1278 (SPPT…AQTD). Positions 1289-1299 (PASSFSHSTPS) are enriched in low complexity. A phosphoserine mark is found at Ser-1326, Ser-1329, Ser-1544, Ser-1600, and Ser-1626. 2 stretches are compositionally biased toward basic and acidic residues: residues 1338-1548 (IAIK…EKKD) and 1586-1605 (QEDK…EKVK). Positions 1632 to 1642 (RAREQEEKYWR) are enriched in basic and acidic residues. Disordered stretches follow at residues 1632–1684 (RARE…RYWR), 1713–1879 (DGQG…FSWG), and 1892–2673 (EGAA…LVNG). Ser-1654 is modified (phosphoserine). A compositionally biased stretch (basic and acidic residues) spans 1655–1666 (PTREEPAGEQKE). 9 positions are modified to phosphoserine: Ser-1675, Ser-1749, Ser-1762, Ser-1776, Ser-1791, Ser-1797, Ser-1801, Ser-1812, and Ser-1818. Residues 1852 to 1867 (LPPAPLSPAPGPPTPA) are compositionally biased toward pro residues. Over residues 1907-1929 (KDYRKAEGEREEEGRAEAPDKSS) the composition is skewed to basic and acidic residues. Ser-1931 bears the Phosphoserine mark. A compositionally biased stretch (basic and acidic residues) spans 1951–1964 (PEQREPTPYPDERS). Thr-1957 bears the Phosphothreonine mark. Residues 2019–2033 (SPISPKSLQSDTPTF) are compositionally biased toward polar residues. Ser-2022 is subject to Phosphoserine. Over residues 2042 to 2066 (TVPPRPEPGPSMEPSLTPPAVPPRA) the composition is skewed to pro residues. The residue at position 2058 (Thr-2058) is a Phosphothreonine. 4 positions are modified to phosphoserine: Ser-2074, Ser-2104, Ser-2106, and Ser-2108. Positions 2086-2122 (PDRRSPSPKESGRSHWDDSTSDSELEKGAREQPEKEA) are enriched in basic and acidic residues. Positions 2175 to 2184 (PAPPQLPSPA) are enriched in pro residues. 5 positions are modified to phosphoserine: Ser-2235, Ser-2252, Ser-2256, Ser-2259, and Ser-2260. Polar residues predominate over residues 2257-2268 (EGSSSEATTPVI). The span at 2312–2325 (ASLDLALAPAPSLP) shows a compositional bias: low complexity. Ser-2449 is subject to Phosphoserine. Positions 2461–2473 (IDDRDLSTEEVRL) are enriched in basic and acidic residues. The span at 2502-2514 (SASDSGSSQSDSD) shows a compositional bias: low complexity. A compositionally biased stretch (pro residues) spans 2559–2575 (DPPPLPQPDPRPSPPRP). Over residues 2590–2602 (GRVERLREKEKVQ) the composition is skewed to basic and acidic residues. Phosphoserine occurs at positions 2649 and 2664.

It belongs to the MAP1 family. 3 different light chains, LC1 (a cleavage product of MAP1B), LC2 (a cleavage product of MAP1A) and LC3 (produced by one of the MAP1LC3 genes), can associate with the MAP1A or MAP1B heavy chains. Interacts with TIAM2. Interacts with guanylate kinase-like domain of DLG1, DLG2 and DLG4. Binds to CSNK1D. In terms of assembly, interacts with ELAVL4. Post-translationally, phosphorylated by CSNK1D. In terms of processing, LC2 is generated from MAP1A by proteolytic processing. In terms of tissue distribution, brain.

The protein localises to the cytoplasm. The protein resides in the cytoskeleton. Its function is as follows. Structural protein involved in the filamentous cross-bridging between microtubules and other skeletal elements. This is Microtubule-associated protein 1A (MAP1A) from Homo sapiens (Human).